Consider the following 227-residue polypeptide: Phosphoribosylformylglycinamidine synthase subunit PurQ (227 aa).

The 225-residue stretch at 3–227 (SSVITFPGSN…FFQNLINNLK (225 aa)) folds into the Glutamine amidotransferase type-1 domain. Cysteine 85 functions as the Nucleophile in the catalytic mechanism. Residues histidine 201 and glutamate 203 contribute to the active site.

As to quaternary structure, part of the FGAM synthase complex composed of 1 PurL, 1 PurQ and 2 PurS subunits.

It is found in the cytoplasm. The catalysed reaction is N(2)-formyl-N(1)-(5-phospho-beta-D-ribosyl)glycinamide + L-glutamine + ATP + H2O = 2-formamido-N(1)-(5-O-phospho-beta-D-ribosyl)acetamidine + L-glutamate + ADP + phosphate + H(+). It catalyses the reaction L-glutamine + H2O = L-glutamate + NH4(+). It functions in the pathway purine metabolism; IMP biosynthesis via de novo pathway; 5-amino-1-(5-phospho-D-ribosyl)imidazole from N(2)-formyl-N(1)-(5-phospho-D-ribosyl)glycinamide: step 1/2. In terms of biological role, part of the phosphoribosylformylglycinamidine synthase complex involved in the purines biosynthetic pathway. Catalyzes the ATP-dependent conversion of formylglycinamide ribonucleotide (FGAR) and glutamine to yield formylglycinamidine ribonucleotide (FGAM) and glutamate. The FGAM synthase complex is composed of three subunits. PurQ produces an ammonia molecule by converting glutamine to glutamate. PurL transfers the ammonia molecule to FGAR to form FGAM in an ATP-dependent manner. PurS interacts with PurQ and PurL and is thought to assist in the transfer of the ammonia molecule from PurQ to PurL. In Pelagibacter ubique (strain HTCC1062), this protein is Phosphoribosylformylglycinamidine synthase subunit PurQ.